The following is a 67-amino-acid chain: DNA-directed RNA polymerase subunit omega (67 aa).

It belongs to the RNA polymerase subunit omega family. In terms of assembly, the RNAP catalytic core consists of 2 alpha, 1 beta, 1 beta' and 1 omega subunit. When a sigma factor is associated with the core the holoenzyme is formed, which can initiate transcription.

It catalyses the reaction RNA(n) + a ribonucleoside 5'-triphosphate = RNA(n+1) + diphosphate. In terms of biological role, promotes RNA polymerase assembly. Latches the N- and C-terminal regions of the beta' subunit thereby facilitating its interaction with the beta and alpha subunits. This Ralstonia pickettii (strain 12J) protein is DNA-directed RNA polymerase subunit omega.